The following is a 198-amino-acid chain: Endonuclease V (198 aa).

Asp-38 and Asp-101 together coordinate Mg(2+).

The protein belongs to the endonuclease V family. Mg(2+) serves as cofactor.

Its subcellular location is the cytoplasm. The enzyme catalyses Endonucleolytic cleavage at apurinic or apyrimidinic sites to products with a 5'-phosphate.. Functionally, DNA repair enzyme involved in the repair of deaminated bases. Selectively cleaves double-stranded DNA at the second phosphodiester bond 3' to a deoxyinosine leaving behind the intact lesion on the nicked DNA. This is Endonuclease V from Saccharolobus islandicus (strain M.16.4 / Kamchatka #3) (Sulfolobus islandicus).